Reading from the N-terminus, the 220-residue chain is MFELRKLPYDTNAFGDFLSAETFSYHHGKHHNTYVTNLNNLIKDTEFAGKDLVSIIKTSNGGVFNNAAQVYNHDFYFDCIKPSTGCGCGGSCQSIDANLQAALEKEFGSLENFKAEFIKGATGVFGSGWFWLVYNTKNQKLEFVGTSNAATPITEDKVPLLVVDVWEHAYYVDHRNARPAYLEKFYAHINWEFVAKAYEWALKEGMGSVSFYANELHPVK.

Residues histidine 26, histidine 73, aspartate 164, and histidine 168 each coordinate Fe cation.

The protein belongs to the iron/manganese superoxide dismutase family. As to quaternary structure, homodimer. Requires Fe cation as cofactor.

The enzyme catalyses 2 superoxide + 2 H(+) = H2O2 + O2. Destroys superoxide anion radicals which are normally produced within the cells and which are toxic to biological systems. This chain is Superoxide dismutase [Fe] (sodB), found in Campylobacter jejuni subsp. jejuni serotype O:2 (strain ATCC 700819 / NCTC 11168).